Here is a 694-residue protein sequence, read N- to C-terminus: Polyphosphate kinase (694 aa).

N45 contributes to the ATP binding site. The Mg(2+) site is built by R367 and R397. H427 functions as the Phosphohistidine intermediate in the catalytic mechanism. Positions 460, 553, and 580 each coordinate ATP.

It belongs to the polyphosphate kinase 1 (PPK1) family. The cofactor is Mg(2+). An intermediate of this reaction is the autophosphorylated ppk in which a phosphate is covalently linked to a histidine residue through a N-P bond.

The enzyme catalyses [phosphate](n) + ATP = [phosphate](n+1) + ADP. Catalyzes the reversible transfer of the terminal phosphate of ATP to form a long-chain polyphosphate (polyP). This is Polyphosphate kinase from Campylobacter coli.